Consider the following 184-residue polypeptide: Peptide deformylase 2 (184 aa).

The Fe cation site is built by Cys-110 and His-153. The active site involves Glu-154. His-157 serves as a coordination point for Fe cation.

Belongs to the polypeptide deformylase family. Fe(2+) is required as a cofactor.

It catalyses the reaction N-terminal N-formyl-L-methionyl-[peptide] + H2O = N-terminal L-methionyl-[peptide] + formate. Its function is as follows. Removes the formyl group from the N-terminal Met of newly synthesized proteins. Requires at least a dipeptide for an efficient rate of reaction. N-terminal L-methionine is a prerequisite for activity but the enzyme has broad specificity at other positions. The sequence is that of Peptide deformylase 2 from Bacillus cereus (strain ATCC 14579 / DSM 31 / CCUG 7414 / JCM 2152 / NBRC 15305 / NCIMB 9373 / NCTC 2599 / NRRL B-3711).